Consider the following 110-residue polypeptide: UPF0145 protein (110 aa).

This sequence belongs to the UPF0145 family.

The protein is UPF0145 protein of Listeria ivanovii.